The sequence spans 229 residues: Large ribosomal subunit protein uL1 (229 aa).

It belongs to the universal ribosomal protein uL1 family. As to quaternary structure, part of the 50S ribosomal subunit.

Binds directly to 23S rRNA. The L1 stalk is quite mobile in the ribosome, and is involved in E site tRNA release. Functionally, protein L1 is also a translational repressor protein, it controls the translation of the L11 operon by binding to its mRNA. The polypeptide is Large ribosomal subunit protein uL1 (Haemophilus influenzae (strain PittEE)).